Here is an 80-residue protein sequence, read N- to C-terminus: Serine palmitoyltransferase small subunit B (80 aa).

Residues 1–11 lie on the Cytoplasmic side of the membrane; that stretch reads MDVKHIKDYLS. Residues 12–29 traverse the membrane as a helical segment; it reads WLYYQYLLITCSYVLEPW. The Lumenal segment spans residues 30 to 36; that stretch reads EQSIFNT. The chain crosses the membrane as a helical span at residues 37–57; the sequence is LLLTIIAMVIYSSYIFIPIHV. Topologically, residues 58–80 are cytoplasmic; that stretch reads RLAVEFFSRIFGGQHESTVALMS.

Belongs to the SPTSS family. SPTSSB subfamily. Component of the serine palmitoyltransferase (SPT) complex, which is composed of SPTLC1, SPTLC2 or SPTLC3 and SPTSSA or SPTSSB. The heterodimer consisting of SPTLC1 and SPTLC2/SPTLC3 forms the catalytic core of the enzyme, while SPTSSA or SPTSSB subunits determine substrate specificity. SPT also interacts with ORMDL proteins, especially ORMDL3, which negatively regulate SPT activity in the presence of ceramides.

The protein localises to the endoplasmic reticulum membrane. It functions in the pathway lipid metabolism; sphingolipid metabolism. Component of the serine palmitoyltransferase multisubunit enzyme (SPT) that catalyzes the initial and rate-limiting step in sphingolipid biosynthesis by condensing L-serine and activated acyl-CoA (most commonly palmitoyl-CoA) to form long-chain bases. The SPT complex is composed of SPTLC1, SPTLC2 or SPTLC3 and SPTSSA or SPTSSB. Within this complex, the heterodimer consisting of SPTLC1 and SPTLC2/SPTLC3 forms the catalytic core. Within the SPT complex, SPTSSB stimulates the catalytic activity and plays a role in substrate specificity. SPT complexes with this subunit showing a preference for longer acyl-CoAs. The SPTLC1-SPTLC2-SPTSSB complex shows a strong preference for C18-CoA substrate, while the SPTLC1-SPTLC3-SPTSSB isozyme displays an ability to use a broader range of acyl-CoAs, without apparent preference. The polypeptide is Serine palmitoyltransferase small subunit B (sptssb) (Xenopus laevis (African clawed frog)).